The primary structure comprises 420 residues: DFGHSKKIRKNVHSLTAEEQNSLRRAMDDLQDDKTRGGFQQIAAFHGEPKWCPRPEAEKKFACCVHGMAVFPHWHRLLTVQGENALRKHGFTGGLPYWDWTRPMSALPHFVADPTYDDSVSSLEEDNPYSHGHIDSVGHDTTRAVRDDLYQSPGFGHYTDIAKQVLLALEQDDFCDFEVQFEIAHNSIHALVGGNEPYGMSTLEYFLYDPIFFLHHSNTDRLWAIWQALQKYRGKPYNTANCAIVRHDTYRKPLQPFGLDSVINPDDETREHSVPRDVFNYKDDFNYEYESLNFNGLSIAQLDRELQRIKSHDRVFAGFLLHEIGQSALVKFYVCKHHVSDCDHYAGEFYILGDEAEMPFAYDRVYKYEISQALHDLDLHVGDNFHLKYEAFNLNGGSLGGVDLSQPSVIFEPAAGSHTA.

Residues aspartate 1–valine 12 are compositionally biased toward basic residues. A disordered region spans residues aspartate 1–glutamine 20. Histidine 46 lines the Cu cation pocket. Cysteine 52 and cysteine 63 are joined by a disulfide. Cu cation is bound by residues histidine 66, histidine 73, histidine 185, histidine 189, and histidine 216. Cystine bridges form between cysteine 175/cysteine 242 and cysteine 335/cysteine 342.

In terms of processing, O-glycosylated. As to expression, hemolymph.

The protein resides in the secreted. It is found in the extracellular space. In terms of biological role, hemocyanins are copper-containing oxygen carriers occurring freely dissolved in the hemolymph of many mollusks and arthropods. The polypeptide is Hemocyanin 2-c chain (Megathura crenulata (Giant keyhole limpet)).